We begin with the raw amino-acid sequence, 124 residues long: MLVIFLGILGLLANQVLGLPTQAGGHLRSTDNPPQEELGYWCTYMESCKFCWECAHGICKNKVNESMPLIIENSYLTSCEVSRWYNQCTYSEGNGHYHVMDCSNPVPHNRPHRLGRKIYEKEDL.

The signal sequence occupies residues 1–28 (MLVIFLGILGLLANQVLGLPTQAGGHLR). The N-linked (GlcNAc...) asparagine; by host glycan is linked to asparagine 64. The short motif at 121–124 (KEDL) is the Prevents secretion from ER element.

It belongs to the asfivirus MGF 110 family.

It localises to the virion. It is found in the host endoplasmic reticulum-Golgi intermediate compartment. Causes the redistribution of lumenal ER protein to an enlarged ERGIC compartment. The protein is Protein MGF 110-4L of African swine fever virus (strain Badajoz 1971 Vero-adapted) (Ba71V).